The chain runs to 135 residues: Fatty acid-binding protein 5 (135 aa).

The residue at position 2 (Ala-2) is an N-acetylalanine. Ser-3 carries the phosphoserine modification. A Nuclear localization signal motif is present at residues 24 to 34; it reads KELGVGLALRK. The N-eicosanoyl ethanolamine site is built by Cys-43 and Arg-109. Cys-120 and Cys-127 are oxidised to a cystine. A (9Z,12Z)-octadecadienoate-binding site is contributed by 129–131; that stretch reads RVY. An N-eicosanoyl ethanolamine-binding site is contributed by Tyr-131. Position 131 (Tyr-131) interacts with hexadecanoate. Tyr-131 bears the Phosphotyrosine mark.

The protein belongs to the calycin superfamily. Fatty-acid binding protein (FABP) family. Monomer.

The protein localises to the cytoplasm. Its subcellular location is the nucleus. It localises to the synapse. It is found in the postsynaptic density. The protein resides in the secreted. The catalysed reaction is hexadecanoate(out) = hexadecanoate(in). It catalyses the reaction (9Z,12Z)-octadecadienoate(out) = (9Z,12Z)-octadecadienoate(in). It carries out the reaction (9Z)-octadecenoate(out) = (9Z)-octadecenoate(in). In terms of biological role, intracellular carrier for long-chain fatty acids and related active lipids, such as endocannabinoids, that regulate the metabolism and actions of the ligands they bind. In addition to the cytosolic transport, selectively delivers specific fatty acids from the cytosol to the nucleus, wherein they activate nuclear receptors. Delivers retinoic acid to the nuclear receptor peroxisome proliferator-activated receptor delta; which promotes proliferation and survival. May also serve as a synaptic carrier of endocannabinoid at central synapses and thus controls retrograde endocannabinoid signaling. Modulates inflammation by regulating PTGES induction via NF-kappa-B activation, and prostaglandin E2 (PGE2) biosynthesis during inflammation. This is Fatty acid-binding protein 5 from Rattus norvegicus (Rat).